Reading from the N-terminus, the 422-residue chain is Probable glucuronosyltransferase Os01g0926400 (422 aa).

At 1–8 (MGTRPCAG) the chain is on the cytoplasmic side. A helical; Signal-anchor for type II membrane protein membrane pass occupies residues 9-29 (VASAVAAAVAVLLLAVSCFAA). Over 30–422 (AATTTQKHGR…QGLENDLKPW (393 aa)) the chain is Lumenal. N149 is a glycosylation site (N-linked (GlcNAc...) asparagine).

This sequence belongs to the glycosyltransferase 47 family.

It localises to the golgi apparatus membrane. Involved in the synthesis of glucuronoxylan hemicellulose in secondary cell walls. This is Probable glucuronosyltransferase Os01g0926400 from Oryza sativa subsp. japonica (Rice).